The chain runs to 517 residues: Synaptic vesicular amine transporter (517 aa).

Topologically, residues 1-20 are cytoplasmic; sequence MALSELALLRRLQESRHSRK. A helical transmembrane segment spans residues 21–41; the sequence is LILFIVFLALLLDNMLLTVVV. The Extracellular portion of the chain corresponds to 42–132; it reads PIIPSYLYSI…EDKDLLNENV (91 aa). Asn-84, Asn-91, and Asn-112 each carry an N-linked (GlcNAc...) asparagine glycan. Cysteines 120 and 327 form a disulfide. Residues 133 to 153 traverse the membrane as a helical segment; that stretch reads QVGLLFASKATVQLLTNPFIG. The Cytoplasmic segment spans residues 154-162; the sequence is LLTNRIGYP. A helical transmembrane segment spans residues 163-183; sequence IPMFTGFCIMFISTVMFAFSR. Residues 184-192 lie on the Extracellular side of the membrane; it reads TYAFLLIAR. Residues 193 to 213 traverse the membrane as a helical segment; that stretch reads SLQGIGSSCSSVAGMGMLASV. Topologically, residues 214 to 222 are cytoplasmic; it reads YTDDEERGN. A helical membrane pass occupies residues 223–245; the sequence is AMGIALGGLAMGVLVGPPFGSVL. Positions 231 and 235 each coordinate serotonin. Topologically, residues 246 to 251 are extracellular; the sequence is YEFVGK. A helical transmembrane segment spans residues 252-274; it reads TAPFLVLAALVLLDGAIQLFVLQ. Residues 275–294 are Cytoplasmic-facing; that stretch reads PSRVQPESQKGTPLTTLLRD. The chain crosses the membrane as a helical span at residues 295–314; the sequence is PYILIAAGSICFANMGIAML. Serotonin-binding residues include Asn-308, Ile-311, Glu-315, Phe-337, and Tyr-344. The Extracellular portion of the chain corresponds to 315–331; it reads EPALPIWMMETMCSHKW. The chain crosses the membrane as a helical span at residues 332–355; that stretch reads QLGVAFLPASVSYLIGTNVFGILA. The Cytoplasmic portion of the chain corresponds to 356–360; it reads HKMGR. Residues 361-381 traverse the membrane as a helical segment; the sequence is WLCALLGMIIVGMSILCIPLA. Topologically, residues 382–392 are extracellular; the sequence is KNIYGLIAPNF. The chain crosses the membrane as a helical span at residues 393–413; the sequence is GVGFAIGMVDSSMMPIMGYLV. Residue Asp-402 participates in serotonin binding. At 414–417 the chain is on the cytoplasmic side; sequence DLRH. Residues 418 to 438 form a helical membrane-spanning segment; it reads VSVYGSVYAIADVAFCMGYAI. Tyr-436 is a serotonin binding site. Topologically, residues 439–443 are extracellular; it reads GPSAG. Residues 444 to 465 form a helical membrane-spanning segment; sequence GAIAKAIGFPWLMTIIGIIDIL. Over 466-517 the chain is Cytoplasmic; that stretch reads FAPLCFFLRSPPAKEEKMAILMDHNCPIKTKMYTQNSSQSHPIGEDEESESD. Residues Ser-514 and Ser-516 each carry the phosphoserine; by CK2 modification.

The protein belongs to the major facilitator superfamily. Vesicular transporter family. In terms of assembly, interacts with SLC6A3.

It is found in the cytoplasmic vesicle. The protein localises to the secretory vesicle. It localises to the synaptic vesicle membrane. The protein resides in the secretory vesicle membrane. Its subcellular location is the cell projection. It is found in the axon. The protein localises to the dendrite. It catalyses the reaction serotonin(in) + 2 H(+)(out) = serotonin(out) + 2 H(+)(in). The catalysed reaction is dopamine(in) + 2 H(+)(out) = dopamine(out) + 2 H(+)(in). It carries out the reaction histamine(in) + 2 H(+)(out) = histamine(out) + 2 H(+)(in). Its activity is regulated as follows. Strongly inhibited by reserpine and tetrabenazine. Also inhibited to a lesser extent by ketanserin and fenfluramine. Reserpine and ketanserin inhibit by blocking the substrate-binding pocket. Tetrabenazine traps SLC18A2/VMAT2 in an occluded conformation and its inhibition is specific to SLC18A2/VMAT2 but not SLC18A1/VMAT1. Electrogenic antiporter that exchanges one cationic monoamine with two intravesicular protons across the membrane of secretory and synaptic vesicles. Uses the electrochemical proton gradient established by the V-type proton-pump ATPase to accumulate high concentrations of monoamines inside the vesicles prior to their release via exocytosis. Transports a variety of catecholamines such as dopamine, adrenaline and noradrenaline, histamine, and indolamines such as serotonin. Regulates the transvesicular monoaminergic gradient that determines the quantal size. Mediates somatodendritic dopamine release in hippocampal neurons, likely as part of a regulated secretory pathway that integrates retrograde synaptic signals. Acts as a primary transporter for striatal dopamine loading ensuring impulse-dependent release of dopamine at the synaptic cleft. Responsible for histamine and serotonin storage and subsequent corelease from mast cell granules. In Bos taurus (Bovine), this protein is Synaptic vesicular amine transporter (SLC18A2).